The following is a 475-amino-acid chain: 3-isopropylmalate dehydratase large subunit (475 aa).

C349, C409, and C412 together coordinate [4Fe-4S] cluster.

This sequence belongs to the aconitase/IPM isomerase family. LeuC type 1 subfamily. As to quaternary structure, heterodimer of LeuC and LeuD. It depends on [4Fe-4S] cluster as a cofactor.

The catalysed reaction is (2R,3S)-3-isopropylmalate = (2S)-2-isopropylmalate. Its pathway is amino-acid biosynthesis; L-leucine biosynthesis; L-leucine from 3-methyl-2-oxobutanoate: step 2/4. In terms of biological role, catalyzes the isomerization between 2-isopropylmalate and 3-isopropylmalate, via the formation of 2-isopropylmaleate. The sequence is that of 3-isopropylmalate dehydratase large subunit from Cereibacter sphaeroides (strain ATCC 17029 / ATH 2.4.9) (Rhodobacter sphaeroides).